A 423-amino-acid polypeptide reads, in one-letter code: G2/mitotic-specific cyclin-B1 (423 aa).

S116 is subject to Phosphoserine; by CDK1. S118 is subject to Phosphoserine. The residue at position 123 (S123) is a Phosphoserine; by PLK1. Residue S137 is modified to Phosphoserine. Interaction with CDK2 stretches follow at residues E159–Y167 and Y248–M251. T311 carries the phosphothreonine modification.

Belongs to the cyclin family. Cyclin AB subfamily. As to quaternary structure, interacts with the CDC2 protein kinase to form a serine/threonine kinase holoenzyme complex also known as maturation promoting factor (MPF). The cyclin subunit imparts substrate specificity to the complex. Binds HEI10. Interacts with catalytically active RALBP1 and CDC2 during mitosis to form an endocytotic complex during interphase. Interacts with CCNF; interaction is required for nuclear localization. Interacts with CDK5RAP3. Interacts with RFPL4A and UBE2A. Interacts with INCA1. Post-translationally, ubiquitinated by the SCF(NIPA) complex during interphase, leading to its destruction. Deubiquitinated by USP22 during G2/M phase. In terms of processing, phosphorylated by PLK1 at Ser-123 on centrosomes during prophase: phosphorylation by PLK1 does not cause nuclear import. Phosphorylation at Ser-137 was also reported to be mediated by PLK1 but Ser-123 seems to be the primary phosphorylation site.

The protein localises to the cytoplasm. The protein resides in the nucleus. Its subcellular location is the cytoskeleton. It is found in the microtubule organizing center. It localises to the centrosome. Essential for the control of the cell cycle at the G2/M (mitosis) transition. The protein is G2/mitotic-specific cyclin-B1 (Ccnb1) of Rattus norvegicus (Rat).